We begin with the raw amino-acid sequence, 124 residues long: NADH-quinone oxidoreductase subunit A (124 aa).

A run of 3 helical transmembrane segments spans residues 11–31 (YLPI…IMIL), 68–88 (LVAI…PWAI), and 93–113 (IGKI…IGFV).

It belongs to the complex I subunit 3 family. NDH-1 is composed of 14 different subunits. Subunits NuoA, H, J, K, L, M, N constitute the membrane sector of the complex.

It is found in the cell inner membrane. It carries out the reaction a quinone + NADH + 5 H(+)(in) = a quinol + NAD(+) + 4 H(+)(out). In terms of biological role, NDH-1 shuttles electrons from NADH, via FMN and iron-sulfur (Fe-S) centers, to quinones in the respiratory chain. The immediate electron acceptor for the enzyme in this species is believed to be ubiquinone. Couples the redox reaction to proton translocation (for every two electrons transferred, four hydrogen ions are translocated across the cytoplasmic membrane), and thus conserves the redox energy in a proton gradient. The polypeptide is NADH-quinone oxidoreductase subunit A (Rickettsia bellii (strain RML369-C)).